A 734-amino-acid chain; its full sequence is Photosystem I P700 chlorophyll a apoprotein A2 (734 aa).

Helical transmembrane passes span 46-69 (IFASHFGQLAIIFLWTSGNLFHVA), 135-158 (LYSGALFLLFLSAISLLAGWLHLQ), 175-199 (LNHHLSGLFGVSSLAWTGHLVHVAI), 273-291 (MAHHHLAIAILFLLAGHMY), 330-353 (IHFQLGLALASLGVITSLVAQHMY), 369-395 (AALYTHHQYIAGFIMTGAFAHGAIFFI), 417-439 (AIISHLSWASLFLGFHTLGLYVH), and 517-535 (FLVHHAIALGLHTTTLILV). [4Fe-4S] cluster is bound by residues Cys559 and Cys568. 2 consecutive transmembrane segments (helical) span residues 575–596 (AFYLAVFWMLNTIGWVTFYWHW) and 643–665 (LSVWAWMFLFGHLVWATGFMFLI). The chlorophyll a site is built by His654, Met662, and Tyr670. Trp671 contributes to the phylloquinone binding site. Residues 707–727 (LVGLAHFSVGYIFTYAAFLIA) form a helical membrane-spanning segment.

Belongs to the PsaA/PsaB family. In terms of assembly, the PsaA/B heterodimer binds the P700 chlorophyll special pair and subsequent electron acceptors. PSI consists of a core antenna complex that captures photons, and an electron transfer chain that converts photonic excitation into a charge separation. The eukaryotic PSI reaction center is composed of at least 11 subunits. The cofactor is P700 is a chlorophyll a/chlorophyll a' dimer, A0 is one or more chlorophyll a, A1 is one or both phylloquinones and FX is a shared 4Fe-4S iron-sulfur center..

Its subcellular location is the plastid. It localises to the chloroplast thylakoid membrane. The enzyme catalyses reduced [plastocyanin] + hnu + oxidized [2Fe-2S]-[ferredoxin] = oxidized [plastocyanin] + reduced [2Fe-2S]-[ferredoxin]. In terms of biological role, psaA and PsaB bind P700, the primary electron donor of photosystem I (PSI), as well as the electron acceptors A0, A1 and FX. PSI is a plastocyanin-ferredoxin oxidoreductase, converting photonic excitation into a charge separation, which transfers an electron from the donor P700 chlorophyll pair to the spectroscopically characterized acceptors A0, A1, FX, FA and FB in turn. Oxidized P700 is reduced on the lumenal side of the thylakoid membrane by plastocyanin. In Lotus japonicus (Lotus corniculatus var. japonicus), this protein is Photosystem I P700 chlorophyll a apoprotein A2.